We begin with the raw amino-acid sequence, 460 residues long: tRNA modification GTPase MnmE (460 aa).

(6S)-5-formyl-5,6,7,8-tetrahydrofolate-binding residues include arginine 29, glutamate 91, and lysine 132. Residues glycine 227–glycine 383 form the TrmE-type G domain. K(+) is bound at residue asparagine 237. Residues asparagine 237–serine 242, threonine 256–threonine 262, and aspartate 281–glycine 284 each bind GTP. Serine 241 is a Mg(2+) binding site. Threonine 256, isoleucine 258, and threonine 261 together coordinate K(+). Position 262 (threonine 262) interacts with Mg(2+). Lysine 460 contributes to the (6S)-5-formyl-5,6,7,8-tetrahydrofolate binding site.

The protein belongs to the TRAFAC class TrmE-Era-EngA-EngB-Septin-like GTPase superfamily. TrmE GTPase family. Homodimer. Heterotetramer of two MnmE and two MnmG subunits. Requires K(+) as cofactor.

It localises to the cytoplasm. Functionally, exhibits a very high intrinsic GTPase hydrolysis rate. Involved in the addition of a carboxymethylaminomethyl (cmnm) group at the wobble position (U34) of certain tRNAs, forming tRNA-cmnm(5)s(2)U34. The chain is tRNA modification GTPase MnmE from Prochlorococcus marinus (strain MIT 9312).